We begin with the raw amino-acid sequence, 306 residues long: Pantothenate kinase (306 aa).

Residue 91 to 98 coordinates ATP; it reads GSVAVGKS.

It belongs to the prokaryotic pantothenate kinase family.

It localises to the cytoplasm. It carries out the reaction (R)-pantothenate + ATP = (R)-4'-phosphopantothenate + ADP + H(+). It functions in the pathway cofactor biosynthesis; coenzyme A biosynthesis; CoA from (R)-pantothenate: step 1/5. This Streptococcus pneumoniae serotype 19F (strain G54) protein is Pantothenate kinase.